We begin with the raw amino-acid sequence, 204 residues long: MTPPGRLYLLRVCSTPPLLLLGLLLALPLEAQGLRGIGLTPSAAQPAHQQLPTPFTRGTLKPAAHLVGDPSTQDSLRWRANTDRAFLRHGFSLSNNSLLVPTSGLYFVYSQVVFSGRGCFPRATPTPLYLAHEVQLFSPQYPFHVPLLSAQKSVCPGPQGPWVRSVYQGAVFLLTRGDQLSTHTDGISHLLLSPSSVFFGAFAL.

Residues 1 to 33 (MTPPGRLYLLRVCSTPPLLLLGLLLALPLEAQG) form the signal peptide. The THD domain occupies 62–204 (PAAHLVGDPS…SSVFFGAFAL (143 aa)). Asn-95 carries N-linked (GlcNAc...) asparagine glycosylation. An intrachain disulfide couples Cys-119 to Cys-155.

This sequence belongs to the tumor necrosis factor family. As to quaternary structure, homotrimer, and heterotrimer of either two LTB and one LTA subunits or (less prevalent) two LTA and one LTB subunits. Interacts with TNFRSF14.

The protein resides in the secreted. Its subcellular location is the membrane. Cytokine that in its homotrimeric form binds to TNFRSF1A/TNFR1, TNFRSF1B/TNFBR and TNFRSF14/HVEM. In its heterotrimeric form with LTB binds to TNFRSF3/LTBR. Lymphotoxin is produced by lymphocytes and is cytotoxic for a wide range of tumor cells in vitro and in vivo. The chain is Lymphotoxin-alpha (LTA) from Bos taurus (Bovine).